Here is a 186-residue protein sequence, read N- to C-terminus: Glutathione peroxidase 7 (186 aa).

Positions 1-18 (MVAAVATAWLLLWAAACA) are cleaved as a signal peptide. C56 is an active-site residue.

This sequence belongs to the glutathione peroxidase family.

It is found in the secreted. The enzyme catalyses 2 glutathione + H2O2 = glutathione disulfide + 2 H2O. Functionally, it protects esophageal epithelia from hydrogen peroxide-induced oxidative stress. It suppresses acidic bile acid-induced reactive oxygen species (ROS) and protects against oxidative DNA damage and double-strand breaks. The chain is Glutathione peroxidase 7 (Gpx7) from Mus musculus (Mouse).